Reading from the N-terminus, the 859-residue chain is Envelope glycoprotein gp160 (859 aa).

A signal peptide spans 1-23; it reads MAYFSSRLPIALLLIGISGFVCK. The Extracellular portion of the chain corresponds to 24 to 678; that stretch reads QYVTVFYGIP…WFDLTSWIKY (655 aa). N-linked (GlcNAc...) asparagine; by host glycosylation occurs at N37. C44 and C57 form a disulfide bridge. N-linked (GlcNAc...) asparagine; by host glycosylation is found at N70, N112, N122, N142, N150, N165, N191, N206, N238, N241, N248, N272, N278, N289, N300, N310, N343, N367, N400, N410, N413, N450, N464, and N468. 5 disulfide bridges follow: C101–C214, C108–C205, C113–C164, C227–C257, and C237–C249. The tract at residues 113–163 is V1; sequence CSKTETNPGNASSTTTTKPTTTSRGLKTINETDPCIKNDSCTGLGEEEIMQ. A V2 region spans residues 164 to 205; that stretch reads CNFSMTGLRRDELKQYKDTWYSEDLECNNTRKYTSRCYIRTC. Residues 305-337 are V3; sequence CKRPGNKTVVPIRTVSGLLFHSQPINKRPRQAW. The cysteines at positions 305 and 338 are disulfide-linked. Disulfide bonds link C392-C449 and C399-C422. The tract at residues 399-422 is V4; it reads CNMTWFLNWVENKTNTTRRNYAPC. The segment at 465-471 is V5; sequence STTNISV. Positions 514–534 are fusion peptide; that stretch reads GVMVLGFLGFLAMAGSAMGAT. The segment at 577–593 is immunosuppression; the sequence is LQARVTAIEKYLKDQAQ. N613, N622, and N638 each carry an N-linked (GlcNAc...) asparagine; by host glycan. A coiled-coil region spans residues 626–647; it reads QQWEKQVHFLDANITALLEEAQ. The interval 659-680 is MPER; binding to GalCer; that stretch reads KINSWDVFGNWFDLTSWIKYIH. A helical membrane pass occupies residues 679–699; sequence IHLGLYIVAGLVVLRIVVYIV. Residues 700-859 lie on the Cytoplasmic side of the membrane; the sequence is QMLARLRKGY…IRQGLELTLL (160 aa). The YXXV motif; contains endocytosis signal signature appears at 709–712; it reads YRPV. Residues 715–744 are disordered; the sequence is SPPSYTQQIPIRKDRGQPANEETEEGGGND. Residue C775 is the site of S-palmitoyl cysteine; by host attachment. A Di-leucine internalization motif motif is present at residues 858-859; that stretch reads LL.

As to quaternary structure, the mature envelope protein (Env) consists of a homotrimer of non-covalently associated gp120-gp41 heterodimers. The resulting complex protrudes from the virus surface as a spike. There seems to be as few as 10 spikes on the average virion. Interacts with human CD4, CCR5 and CXCR4, to form a P4HB/PDI-CD4-CXCR4-gp120 complex. Gp120 also interacts with the C-type lectins CD209/DC-SIGN and CLEC4M/DC-SIGNR (collectively referred to as DC-SIGN(R)). Gp120 and gp41 interact with GalCer. In terms of assembly, the mature envelope protein (Env) consists of a homotrimer of non-covalently associated gp120-gp41 heterodimers. The resulting complex protrudes from the virus surface as a spike. There seems to be as few as 10 spikes on the average virion. Post-translationally, specific enzymatic cleavages in vivo yield mature proteins. Envelope glycoproteins are synthesized as an inactive precursor that is heavily N-glycosylated and processed likely by host cell furin in the Golgi to yield the mature SU and TM proteins. The cleavage site between SU and TM requires the minimal sequence [KR]-X-[KR]-R. Palmitoylation of the transmembrane protein and of Env polyprotein (prior to its proteolytic cleavage) is essential for their association with host cell membrane lipid rafts. Palmitoylation is therefore required for envelope trafficking to classical lipid rafts, but not for viral replication.

It is found in the virion membrane. It localises to the host cell membrane. The protein resides in the host endosome membrane. Its function is as follows. The surface protein gp120 (SU) attaches the virus to the host lymphoid cell by binding to the primary receptor CD4. This interaction induces a structural rearrangement creating a high affinity binding site for a chemokine coreceptor like CXCR4 and/or CCR5. This peculiar 2 stage receptor-interaction strategy allows gp120 to maintain the highly conserved coreceptor-binding site in a cryptic conformation, protected from neutralizing antibodies. Since CD4 also displays a binding site for the disulfide-isomerase P4HB/PDI, a P4HB/PDI-CD4-CXCR4-gp120 complex may form. In that complex, P4HB/PDI could reach and reduce gp120 disulfide bonds, causing major conformational changes in gp120. TXN, another PDI family member could also be involved in disulfide rearrangements in Env during fusion. These changes are transmitted to the transmembrane protein gp41 and are thought to activate its fusogenic potential by unmasking its fusion peptide. The surface protein gp120 is a ligand for CD209/DC-SIGN and CLEC4M/DC-SIGNR, which are respectively found on dendritic cells (DCs), and on endothelial cells of liver sinusoids and lymph node sinuses. These interactions allow capture of viral particles at mucosal surfaces by these cells and subsequent transmission to permissive cells. DCs are professional antigen presenting cells, critical for host immunity by inducing specific immune responses against a broad variety of pathogens. They act as sentinels in various tissues where they take up antigen, process it, and present it to T-cells following migration to lymphoid organs. HIV subverts the migration properties of dendritic cells to gain access to CD4+ T-cells in lymph nodes. Virus transmission to permissive T-cells occurs either in trans (without DCs infection, through viral capture and transmission), or in cis (following DCs productive infection, through the usual CD4-gp120 interaction), thereby inducing a robust infection. In trans infection, bound virions remain infectious over days and it is proposed that they are not degraded, but protected in non-lysosomal acidic organelles within the DCs close to the cell membrane thus contributing to the viral infectious potential during DCs' migration from the periphery to the lymphoid tissues. On arrival at lymphoid tissues, intact virions recycle back to DCs' cell surface allowing virus transmission to CD4+ T-cells. Virion capture also seems to lead to MHC-II-restricted viral antigen presentation, and probably to the activation of HIV-specific CD4+ cells. In terms of biological role, the transmembrane protein gp41 (TM) acts as a class I viral fusion protein. Under the current model, the protein has at least 3 conformational states: pre-fusion native state, pre-hairpin intermediate state, and post-fusion hairpin state. During fusion of viral and target intracellular membranes, the coiled coil regions (heptad repeats) assume a trimer-of-hairpins structure, positioning the fusion peptide in close proximity to the C-terminal region of the ectodomain. The formation of this structure appears to drive apposition and subsequent fusion of viral and target cell membranes. Complete fusion occurs in host cell endosomes and is dynamin-dependent, however some lipid transfer might occur at the plasma membrane. The virus undergoes clathrin-dependent internalization long before endosomal fusion, thus minimizing the surface exposure of conserved viral epitopes during fusion and reducing the efficacy of inhibitors targeting these epitopes. Membranes fusion leads to delivery of the nucleocapsid into the cytoplasm. Functionally, the envelope glycoprotein gp160 precursor down-modulates cell surface CD4 antigen by interacting with it in the endoplasmic reticulum and blocking its transport to the cell surface. Its function is as follows. The gp120-gp41 heterodimer seems to contribute to T-cell depletion during HIV-1 infection. The envelope glycoproteins expressed on the surface of infected cells induce apoptosis through an interaction with uninfected cells expressing the receptor (CD4) and the coreceptors CXCR4 or CCR5. This type of bystander killing may be obtained by at least three distinct mechanisms. First, the interaction between the 2 cells can induce cellular fusion followed by nuclear fusion within the syncytium. Syncytia are condemned to die from apoptosis. Second, the 2 interacting cells may not fuse entirely and simply exchange plasma membrane lipids, after a sort of hemifusion process, followed by rapid death. Third, it is possible that virus-infected cells, on the point of undergoing apoptosis, fuse with CD4-expressing cells, in which case apoptosis is rapidly transmitted from one cell to the other and thus occurs in a sort of contagious fashion. The gp120-gp41 heterodimer allows rapid transcytosis of the virus through CD4 negative cells such as simple epithelial monolayers of the intestinal, rectal and endocervical epithelial barriers. Both gp120 and gp41 specifically recognize glycosphingolipids galactosyl-ceramide (GalCer) or 3' sulfo-galactosyl-ceramide (GalS) present in the lipid rafts structures of epithelial cells. Binding to these alternative receptors allows the rapid transcytosis of the virus through the epithelial cells. This transcytotic vesicle-mediated transport of virions from the apical side to the basolateral side of the epithelial cells does not involve infection of the cells themselves. The polypeptide is Envelope glycoprotein gp160 (env) (Human immunodeficiency virus type 2 subtype B (isolate D205) (HIV-2)).